Reading from the N-terminus, the 415-residue chain is MAAAVAGGGEEGEELLLLSAVEAGSFGGGGDGGGAGAAAEKSWRLNFDGFRPPEVQQERRPPRGLHHHCLGVLSQGPEDVVAEYYQQQVEMLEGFNEMDTLTDRGFLPGMSKEEREKVARSETLAIRLSNIANMVLFAAKVYASVRSGSLAIIASTLDSLLDLLSGFILWFTAFSMQTPNPYRYPIGKKRMQPLGILVFASVMATLGLQIILESVRSLLSDGDEFSLTKEQEKWVVDIMLAVTLVKLALVLYCRTFTNEIVKAYAQDHFFDVITNMIGLVAALLATYIEGWIDPVGAIILAIYTIRTWSMTVLENVHSLVGQSASPEYLQKLTYLCWNHHKAVRHIDTVRAYTFGSHYFVEVDIVLPSSMPLQEAHDIGEALQEKLERLPEIERAFVHLDYEFTHRPEHALSHEK.

At 1–124 (MAAAVAGGGE…REKVARSETL (124 aa)) the chain is on the cytoplasmic side. The helical transmembrane segment at 125–145 (AIRLSNIANMVLFAAKVYASV) threads the bilayer. At 146 to 150 (RSGSL) the chain is on the vacuolar side. A helical transmembrane segment spans residues 151–171 (AIIASTLDSLLDLLSGFILWF). The Cytoplasmic segment spans residues 172-192 (TAFSMQTPNPYRYPIGKKRMQ). A helical transmembrane segment spans residues 193-213 (PLGILVFASVMATLGLQIILE). At 214–232 (SVRSLLSDGDEFSLTKEQE) the chain is on the vacuolar side. A helical transmembrane segment spans residues 233-253 (KWVVDIMLAVTLVKLALVLYC). The Cytoplasmic portion of the chain corresponds to 254-268 (RTFTNEIVKAYAQDH). Residues 269–291 (FFDVITNMIGLVAALLATYIEGW) form a helical membrane-spanning segment. The Vacuolar segment spans residues 292-293 (ID). Residues 294–313 (PVGAIILAIYTIRTWSMTVL) traverse the membrane as a helical segment. Topologically, residues 314–415 (ENVHSLVGQS…RPEHALSHEK (102 aa)) are cytoplasmic.

Belongs to the cation diffusion facilitator (CDF) transporter (TC 2.A.4) family. SLC30A subfamily.

It is found in the vacuole membrane. In terms of biological role, involved in sequestration of excess metal in the cytoplasm into vacuoles to maintain metal homeostasis. The protein is Metal tolerance protein 5 (MTP5) of Oryza sativa subsp. japonica (Rice).